The primary structure comprises 386 residues: Aspergillopepsin-1 (386 aa).

A signal peptide spans 1–20 (MVVFSKVAAAAFGLSAVASA). The propeptide at 21 to 69 (MPAAPPRQGFTINQLTRAIPKRTINLPAIYANALSKYGGNVPPHIQDAM) is activation peptide. A Peptidase A1 domain is found at 85 to 383 (YLTPVAVGGT…DSEGPQLGFA (299 aa)). Residue Asp101 is part of the active site. Residue Asn130 is glycosylated (N-linked (GlcNAc...) asparagine). Asp275 is a catalytic residue. Cys311 and Cys346 form a disulfide bridge.

It belongs to the peptidase A1 family. Monomer.

The protein localises to the secreted. The enzyme catalyses Hydrolysis of proteins with broad specificity. Generally favors hydrophobic residues in P1 and P1', but also accepts Lys in P1, which leads to activation of trypsinogen. Does not clot milk.. In terms of biological role, secreted aspartic endopeptidase that allows assimilation of proteinaceous substrates. The scissile peptide bond is attacked by a nucleophilic water molecule activated by two aspartic residues in the active site. Shows a broad primary substrate specificity. Favors hydrophobic residues at the P1 and P1' positions, but also accepts a lysine residue in the P1 position, leading to the activation of trypsinogen and chymotrypsinogen A. In Emericella nidulans (strain FGSC A4 / ATCC 38163 / CBS 112.46 / NRRL 194 / M139) (Aspergillus nidulans), this protein is Aspergillopepsin-1.